The primary structure comprises 246 residues: 4-hydroxy-tetrahydrodipicolinate reductase (246 aa).

7–12 is a binding site for NAD(+); it reads GCSGRM. Arginine 34 provides a ligand contact to NADP(+). NAD(+) is bound by residues 76–78 and 102–105; these read ATT and CPNT. Histidine 135 serves as the catalytic Proton donor/acceptor. Histidine 136 is a binding site for (S)-2,3,4,5-tetrahydrodipicolinate. Residue lysine 139 is the Proton donor of the active site. 145 to 146 contacts (S)-2,3,4,5-tetrahydrodipicolinate; that stretch reads GT.

Belongs to the DapB family.

It localises to the cytoplasm. The enzyme catalyses (S)-2,3,4,5-tetrahydrodipicolinate + NAD(+) + H2O = (2S,4S)-4-hydroxy-2,3,4,5-tetrahydrodipicolinate + NADH + H(+). It catalyses the reaction (S)-2,3,4,5-tetrahydrodipicolinate + NADP(+) + H2O = (2S,4S)-4-hydroxy-2,3,4,5-tetrahydrodipicolinate + NADPH + H(+). It functions in the pathway amino-acid biosynthesis; L-lysine biosynthesis via DAP pathway; (S)-tetrahydrodipicolinate from L-aspartate: step 4/4. Catalyzes the conversion of 4-hydroxy-tetrahydrodipicolinate (HTPA) to tetrahydrodipicolinate. The chain is 4-hydroxy-tetrahydrodipicolinate reductase from Chlamydia abortus (strain DSM 27085 / S26/3) (Chlamydophila abortus).